A 64-amino-acid chain; its full sequence is MGQVFMVHHGDVEQALRRLKQHLSREGITPGRKRIFEKPSEKRHRRAVETRRKIRKQKLRVVPY.

Belongs to the bacterial ribosomal protein bS21 family.

In Neorickettsia sennetsu (strain ATCC VR-367 / Miyayama) (Ehrlichia sennetsu), this protein is Small ribosomal subunit protein bS21.